Here is a 111-residue protein sequence, read N- to C-terminus: Integration host factor subunit alpha (111 aa).

This sequence belongs to the bacterial histone-like protein family. As to quaternary structure, heterodimer of an alpha and a beta chain.

In terms of biological role, this protein is one of the two subunits of integration host factor, a specific DNA-binding protein that functions in genetic recombination as well as in transcriptional and translational control. The chain is Integration host factor subunit alpha from Polaromonas sp. (strain JS666 / ATCC BAA-500).